A 553-amino-acid polypeptide reads, in one-letter code: Probable cytochrome P450 301a1, mitochondrial (553 aa).

C502 lines the heme pocket.

It belongs to the cytochrome P450 family. Heme serves as cofactor.

The protein localises to the mitochondrion membrane. The chain is Probable cytochrome P450 301a1, mitochondrial (Cyp301a1) from Drosophila melanogaster (Fruit fly).